The following is a 1169-amino-acid chain: Rabankyrin-5 (1169 aa).

Alanine 2 is subject to N-acetylalanine. The region spanning 68 to 130 (SDLKIKVGDR…IYTDELEFRE (63 aa)) is the BTB domain. ANK repeat units follow at residues 217–247 (KTEYPLHKAIKVEREDVVFLYLIEMDSQLPG), 255–284 (NGDLALDLALSRRLESIATTLVSHKADVDM), 288–317 (SGWSLLHKGIQRGDLFAATFLIKNGAFVNA), 322–362 (AQET…NPNM), and 366–396 (KGRTPLHVSIMAGNEYVFSQLLQCKQLDLEL). Phosphoserine is present on serine 270. The short motif at 421–423 (NPF) is the NPF element. ANK repeat units follow at residues 490–519 (WGETPLHTACRHGLANLTAELLQQGANPNL), 542–572 (HLQTPLHMAIAYNHPDVVSVILEQKANALHA), 588–617 (RDQTVLGLALWTGMHTIAAQLLGSGAAIND), 621–650 (DGQTLLHMAIQRQDSKSALFLLEHQADINV), 654–683 (DGETALQLAIRNQLPLVVDAICTRGADMSV), 687–716 (KGNPPLWLALANNLEDIASTLVRHGCDATC), 724–753 (CLQTLLHRAIDENNEPTACFLIRSGCDVNS), 769–798 (DGQTPLHLAASWGLEETVQCLLEFGANVNA), 802–832 (EGRTPIHVAISSQHGVIIQLLVSHPDIHLNV), 836–865 (QGLTPFACAMTFKNNKSAEAILKRESGAAE), 870–899 (KGRNFLHVAVQNSDIESVLFLISVHANVNS), 905–934 (SKLTPLHLAVQAGSEIIVRNLLLAGAKVNE), 938–967 (HRQTALHLAAQQDLPTICSVLLENGVDFAA), 971–1001 (NGNNALHLAVMHGRLNNIRVLLTECTVDAEA), 1005–1037 (RGQSPLHILGQYGKENAAAIFDLFLECMPGYPL), and 1043–1072 (DGSTVLLLAYMKGNANLCRAIVRSGARLGV). The interaction with RHOD and RAB5A stretch occupies residues 650–759 (VRTQDGETAL…DVNSPRQPGA (110 aa)). The segment at 1104–1164 (WCDGSYCYEC…VCNICFDVLT (61 aa)) adopts an FYVE-type zinc-finger fold. 8 residues coordinate Zn(2+): cysteine 1110, cysteine 1113, cysteine 1126, cysteine 1129, cysteine 1134, cysteine 1137, cysteine 1156, and cysteine 1159.

As to quaternary structure, interacts with RAB5A (in GTP-bound form). Interacts with RHOD (independent of GTP-loaded status). Interacts with EHD1. Interacts with VPS26A; the interaction is independent of EHD1 and is indicative for an association with the cargo recognition subcomplex of the retromer complex. High expression in whole adult brain and intermediate expression in all other tissues and specific brain regions examined, including fetal brain.

The protein localises to the cytoplasm. It is found in the endosome membrane. It localises to the early endosome. Its function is as follows. Proposed effector of Rab5. Binds to phosphatidylinositol 3-phosphate (PI(3)P). Involved in homotypic early endosome fusion and to a lesser extent in heterotypic fusion of chlathrin-coated vesicles with early endosomes. Involved in macropinocytosis; the function is dependent on Rab5-GTP. Required for correct endosomal localization. Involved in the internalization and trafficking of activated tyrosine kinase receptors such as PDGFRB. Regulates the subcellular localization of the retromer complex in a EHD1-dependent manner. Involved in endosome-to-Golgi transport and biosynthetic transport to late endosomes and lysosomes indicative for a regulation of retromer complex-mediated retrograde transport. This Homo sapiens (Human) protein is Rabankyrin-5 (ANKFY1).